The sequence spans 206 residues: Large ribosomal subunit protein uL4 (206 aa).

A disordered region spans residues 46 to 77 (GTRAQKDREQVKHSTKKPFKQKGTGNARAGMT).

The protein belongs to the universal ribosomal protein uL4 family. Part of the 50S ribosomal subunit.

Functionally, one of the primary rRNA binding proteins, this protein initially binds near the 5'-end of the 23S rRNA. It is important during the early stages of 50S assembly. It makes multiple contacts with different domains of the 23S rRNA in the assembled 50S subunit and ribosome. In terms of biological role, forms part of the polypeptide exit tunnel. This is Large ribosomal subunit protein uL4 from Acidovorax ebreus (strain TPSY) (Diaphorobacter sp. (strain TPSY)).